The chain runs to 145 residues: Phospholipase A2 phospholipin (145 aa).

A signal peptide spans 1-15 (MVDLARRCSGSTEGR). W24, G26, and G28 together coordinate Ca(2+). Intrachain disulfides connect C25–C46, C45–C84, C52–C77, C75–C116, and C121–C132. H49 is a catalytic residue. D50 serves as a coordination point for Ca(2+). Positions 124 to 128 (KRSGR) are excised as a propeptide.

Belongs to the phospholipase A2 family. Group III subfamily. Heterodimer composed of a small subunit and a large subunit; disulfid-linked. Requires Ca(2+) as cofactor. Expressed by the venom gland.

It localises to the secreted. The catalysed reaction is a 1,2-diacyl-sn-glycero-3-phosphocholine + H2O = a 1-acyl-sn-glycero-3-phosphocholine + a fatty acid + H(+). Its function is as follows. Scorpion venom phospholipase A2 (PLA2) that contains enzymatic activity, but does not inhibit ryanodine receptors in contrary to imperatoxin-1, another heterodimer of P.imperator venom. PLA2 catalyzes the calcium-dependent hydrolysis of the 2-acyl groups in 3-sn-phosphoglycerides. The polypeptide is Phospholipase A2 phospholipin (Pandinus imperator (Emperor scorpion)).